The chain runs to 144 residues: Large ribosomal subunit protein uL15 (144 aa).

The disordered stretch occupies residues 1 to 59 (MELNNLKPAEGAKHAKRRVGRGIGSGLGKTAGRGHKGQKSRSGGFHKVGFEGGQMPLQR). A compositionally biased stretch (gly residues) spans 21–31 (RGIGSGLGKTA).

Belongs to the universal ribosomal protein uL15 family. In terms of assembly, part of the 50S ribosomal subunit.

Its function is as follows. Binds to the 23S rRNA. This Burkholderia thailandensis (strain ATCC 700388 / DSM 13276 / CCUG 48851 / CIP 106301 / E264) protein is Large ribosomal subunit protein uL15.